Reading from the N-terminus, the 336-residue chain is Plant-specific TFIIB-related protein 2 (336 aa).

Residues 2–34 (EEETCLDCKRPTIMVVDHSSGDTICSECGLVLE) form a TFIIB-type zinc finger. Positions 6, 9, 26, and 29 each coordinate Zn(2+).

As to expression, specifically expressed in reproductive organs and seeds.

The protein localises to the nucleus. Plant-specific TFIIB-related protein involved in the regulation of endosperm proliferation during the syncytial phase of endosperm development. Does not contribute to RNA polymerase IV or V activities in reproductive tissues. In Arabidopsis thaliana (Mouse-ear cress), this protein is Plant-specific TFIIB-related protein 2.